Consider the following 345-residue polypeptide: Uroporphyrinogen decarboxylase (345 aa).

Substrate-binding positions include 27 to 31, Asp77, Tyr152, Ser207, and His323; that span reads RQAGR.

It belongs to the uroporphyrinogen decarboxylase family. Homodimer.

The protein resides in the cytoplasm. The enzyme catalyses uroporphyrinogen III + 4 H(+) = coproporphyrinogen III + 4 CO2. Its pathway is porphyrin-containing compound metabolism; protoporphyrin-IX biosynthesis; coproporphyrinogen-III from 5-aminolevulinate: step 4/4. Functionally, catalyzes the decarboxylation of four acetate groups of uroporphyrinogen-III to yield coproporphyrinogen-III. The sequence is that of Uroporphyrinogen decarboxylase from Maricaulis maris (strain MCS10) (Caulobacter maris).